A 119-amino-acid chain; its full sequence is Large ribosomal subunit protein bL20 (119 aa).

This sequence belongs to the bacterial ribosomal protein bL20 family.

Its function is as follows. Binds directly to 23S ribosomal RNA and is necessary for the in vitro assembly process of the 50S ribosomal subunit. It is not involved in the protein synthesizing functions of that subunit. The protein is Large ribosomal subunit protein bL20 of Bacillus velezensis (strain DSM 23117 / BGSC 10A6 / LMG 26770 / FZB42) (Bacillus amyloliquefaciens subsp. plantarum).